The following is a 514-amino-acid chain: AAA-ATPase ASD, mitochondrial (514 aa).

The chain crosses the membrane as a helical span at residues 7-24 (VWTNTGSALASLVFIYTI). 250–257 (GPPGTGKS) serves as a coordination point for ATP. Disordered regions lie at residues 311–342 (GQRK…ENKG) and 467–514 (KEEA…TMKD). Basic and acidic residues-rich tracts occupy residues 331–342 (KQMKKDQGENKG) and 467–502 (KEEA…KEEK).

The protein belongs to the AAA ATPase family. BCS1 subfamily. Mg(2+) serves as cofactor. Expressed in seeds, specifically in the embryo.

The protein resides in the mitochondrion membrane. It carries out the reaction ATP + H2O = ADP + phosphate + H(+). Its function is as follows. Required to regulate morphology and anatomy during seed maturation. In Arabidopsis thaliana (Mouse-ear cress), this protein is AAA-ATPase ASD, mitochondrial (AATP1).